The chain runs to 99 residues: MRSLTLAALLLCSLLLVFHTSAAAELEAQEGHLMIPGDTDTALETVDDERFFECTFECDIKKEGKPCKPKGCKCKDKDNKDHKKCSGGWRCKLKLCLKF.

An N-terminal signal peptide occupies residues 1-23 (MRSLTLAALLLCSLLLVFHTSAA). A propeptide spanning residues 24 to 50 (AELEAQEGHLMIPGDTDTALETVDDER) is cleaved from the precursor. 4 disulfides stabilise this stretch: Cys54–Cys67, Cys58–Cys91, Cys72–Cys74, and Cys85–Cys96.

The protein belongs to the neurotoxin 12 (Hwtx-2) family. 04 (lasiotoxin) subfamily. Expressed by the venom gland.

The protein localises to the secreted. Its function is as follows. Toxin that causes irreversible contractile paralysis into adult Aedes aegypti resulting in 100% mortality after 24 hours. The polypeptide is U1-theraphotoxin-Lsp1a (Lasiodora sp. (strain IBSP 8539) (Brazilian salmon pink birdeater)).